The sequence spans 566 residues: Membrane protein insertase YidC (566 aa).

The chain crosses the membrane as a helical span at residues 6–26 (NLLLLALLFVSFLLYTAWVEE). Positions 30–80 (QVAPQVQTEQVDSSVPASVASSANSANLSDGVPNSPQQSSTDATSTELPAS) are disordered. Over residues 31 to 41 (VAPQVQTEQVD) the composition is skewed to polar residues. Low complexity predominate over residues 42–58 (SSVPASVASSANSANLS). Over residues 61–80 (VPNSPQQSSTDATSTELPAS) the composition is skewed to polar residues. 4 consecutive transmembrane segments (helical) span residues 356 to 376 (LLLF…LITF), 433 to 453 (LGGC…YWSL), 471 to 491 (LSVQ…MFFI), and 510 to 530 (FMPV…VLYW).

This sequence belongs to the OXA1/ALB3/YidC family. Type 1 subfamily. As to quaternary structure, interacts with the Sec translocase complex via SecD. Specifically interacts with transmembrane segments of nascent integral membrane proteins during membrane integration.

The protein resides in the cell inner membrane. Its function is as follows. Required for the insertion and/or proper folding and/or complex formation of integral membrane proteins into the membrane. Involved in integration of membrane proteins that insert both dependently and independently of the Sec translocase complex, as well as at least some lipoproteins. Aids folding of multispanning membrane proteins. This is Membrane protein insertase YidC from Psychromonas ingrahamii (strain DSM 17664 / CCUG 51855 / 37).